Consider the following 360-residue polypeptide: Uroporphyrinogen decarboxylase (360 aa).

Substrate contacts are provided by residues 27-31, F46, D77, Y154, T209, and H327; that span reads RQSGR.

The protein belongs to the uroporphyrinogen decarboxylase family. In terms of assembly, homodimer.

It is found in the cytoplasm. It carries out the reaction uroporphyrinogen III + 4 H(+) = coproporphyrinogen III + 4 CO2. It participates in porphyrin-containing compound metabolism; protoporphyrin-IX biosynthesis; coproporphyrinogen-III from 5-aminolevulinate: step 4/4. Its function is as follows. Catalyzes the decarboxylation of four acetate groups of uroporphyrinogen-III to yield coproporphyrinogen-III. The sequence is that of Uroporphyrinogen decarboxylase from Wigglesworthia glossinidia brevipalpis.